The following is a 405-amino-acid chain: Cysteine desulfurase IscS (405 aa).

Residues 75-76 (AT), N156, Q184, and 204-206 (SAH) each bind pyridoxal 5'-phosphate. An N6-(pyridoxal phosphate)lysine modification is found at K207. Residue T244 coordinates pyridoxal 5'-phosphate. The active-site Cysteine persulfide intermediate is C329. C329 contacts [2Fe-2S] cluster.

It belongs to the class-V pyridoxal-phosphate-dependent aminotransferase family. NifS/IscS subfamily. In terms of assembly, homodimer. Forms a heterotetramer with IscU, interacts with other sulfur acceptors. Pyridoxal 5'-phosphate is required as a cofactor.

It is found in the cytoplasm. It carries out the reaction (sulfur carrier)-H + L-cysteine = (sulfur carrier)-SH + L-alanine. Its pathway is cofactor biosynthesis; iron-sulfur cluster biosynthesis. In terms of biological role, master enzyme that delivers sulfur to a number of partners involved in Fe-S cluster assembly, tRNA modification or cofactor biosynthesis. Catalyzes the removal of elemental sulfur atoms from cysteine to produce alanine. Functions as a sulfur delivery protein for Fe-S cluster synthesis onto IscU, an Fe-S scaffold assembly protein, as well as other S acceptor proteins. The protein is Cysteine desulfurase IscS of Acinetobacter baumannii (strain AB307-0294).